Reading from the N-terminus, the 116-residue chain is QAPPDKVIPIISQNEVRNPDGSYQWNYETGNGIKADETGTLKKGSKPDEGDFIVAQGSFSYTGPDGTAYSVQYQADDENGFVPQGAHFPTPPPIPPAIQRALDYLATLPSTPEPRP.

Gln-1 carries the pyrrolidone carboxylic acid modification. Residues 20 to 92 (DGSYQWNYET…PQGAHFPTPP (73 aa)) form the Chitin-binding type R&amp;R domain. Residues Thr-90 and Thr-107 are each glycosylated (O-linked (HexNAc...) threonine). The O-linked (HexNAc...) serine glycan is linked to Ser-110. A glycan (O-linked (HexNAc...) threonine) is linked at Thr-111. At Pro-116 the chain carries Proline amide.

Functionally, component of the abdominal endocuticle. This chain is Endocuticle structural glycoprotein SgAbd-4, found in Schistocerca gregaria (Desert locust).